Reading from the N-terminus, the 440-residue chain is Ferredoxin--NADP reductase (440 aa).

The CpcD-like domain maps to 17-75 (SRVFVYEVVGMRQNEETDQTNYPIRKSGSVFIRVPYNRMNQEMQRITRLGGKIVTIQTV). A disordered region spans residues 99–142 (KSEGNGKATPVKTDSGAKAFAKPPAEEQLKKKDNKGNTMTQAKA). The span at 122 to 133 (PAEEQLKKKDNK) shows a compositional bias: basic and acidic residues. Residues 155 to 279 (NAPFIGKVIS…TGPVGKEMLL (125 aa)) form the FAD-binding FR-type domain. FAD is bound by residues 214–217 (RLYS), 235–237 (CVR), Y241, 253–255 (VCS), and T294. 2 residues coordinate NADP(+): S217 and R237. Residues T294, 330–331 (VP), 360–361 (SR), 370–374 (RMYIQ), 399–400 (GL), and E438 contribute to the NADP(+) site.

This sequence belongs to the ferredoxin--NADP reductase type 1 family. It depends on FAD as a cofactor.

The protein localises to the cellular thylakoid membrane. The enzyme catalyses 2 reduced [2Fe-2S]-[ferredoxin] + NADP(+) + H(+) = 2 oxidized [2Fe-2S]-[ferredoxin] + NADPH. This Nostoc sp. (strain ATCC 29151 / PCC 7119) (Anabaena sp.) protein is Ferredoxin--NADP reductase (petH).